The primary structure comprises 656 residues: MKTDGNTTLDTTISMEELERTVKSAYEALAKDQQDDGHWIYELEADVTIPAQFILLEHTLDKIDEELEQKIANYLRRCQSREHWGWPVYYGGEFNISASVQAYFALKMTGEDINAPHMVRAREAILAHGGPEYANVFTRIQLSLFGEASWLATPFMPVEIMLLPRWMYFSIWNMSYWSRTTVAPLLIVADLKPKAINPRNVHIPELFPTPPDKVKTWIHGPFRSKWGHVFKFIDTAIRPFTRFVPSFLHKKAYKAALDFIEPRLNGVDGLGAIYPPMSYSAVMYRALGIPDDDPRAATNWEALKGLLVIKEREAYCQACVSPVWDTALSGHALMEASFGPDGINADRTEKLIDRAAHWLRAHQVLNVVGDWAINNPNLQPGGWAFQYGNDYYPDVDDTAVAAMLLHRQNLPENEEALDRARKWIIGMQSSNGGWGAFDIDNDKQILNDIPFADHGALLDPPTADVSARCISLLAELGHPEDRPVIERGIKYLRKEQEEDGSWFGRWGTNYIYGAWSVLCAFNASGVPHDDPSVLKCVNFLKSVQREDGGWGESCETYEGSAHGVYTESLPSQTAWAVLGLMASGRRTDPAVKRGIVWLIQHQQDNGEWAEEPFNAVGFPRMFYLHYLGYKQFFPLLALARYRHMEKSGTNNVSFAF.

The stretch at 68-110 (EQKIANYLRRCQSREHWGWPVYYGGEFNISASVQAYFALKMTG) is one PFTB 1 repeat. The active-site Proton donor is the Asp396. PFTB repeat units follow at residues 417–459 (LDRA…ALLD), 485–525 (IERG…NASG), 533–582 (VLKC…GLMA), and 591–634 (VKRG…QFFP).

This sequence belongs to the terpene cyclase/mutase family.

The catalysed reaction is squalene = hop-22(29)-ene. It carries out the reaction squalene + H2O = hopan-22-ol. Functionally, squalene cyclase that catalyzes the oxygen-independent cyclization of squalene into hopanoids, a class of cyclic triterpenoids including hop-22(29)-ene, hop-17(21)-ene, hop-21(22)-ene, and hopan-22-ol. The polypeptide is Squalene-hopene cyclase (Schizosaccharomyces japonicus (strain yFS275 / FY16936) (Fission yeast)).